A 312-amino-acid chain; its full sequence is Protoheme IX farnesyltransferase (312 aa).

Helical transmembrane passes span 29 to 49, 50 to 70, 90 to 110, 117 to 137, 150 to 170, 177 to 197, 223 to 243, 248 to 268, and 292 to 312; these read VMSLVVFTGLVGLVVAPGHMN, PVLAAISILCVAVGAGASGAL, IPAGIIAPNQVLAFGLTLSAF, LMVNWLSAALLAFTIFFYAVV, IVIGGAAGAFPPMIGWAAATG, VVLFMIIFLWTPPHFWALSLF, ALFYSIIMAPVGVLPWVLGFA, GAISTLLGLAFVYYAWRMWVA, and LFAVLLVEALVMKALIAFGGF.

This sequence belongs to the UbiA prenyltransferase family. Protoheme IX farnesyltransferase subfamily.

It is found in the cell inner membrane. It carries out the reaction heme b + (2E,6E)-farnesyl diphosphate + H2O = Fe(II)-heme o + diphosphate. The protein operates within porphyrin-containing compound metabolism; heme O biosynthesis; heme O from protoheme: step 1/1. Functionally, converts heme B (protoheme IX) to heme O by substitution of the vinyl group on carbon 2 of heme B porphyrin ring with a hydroxyethyl farnesyl side group. This chain is Protoheme IX farnesyltransferase, found in Brucella anthropi (strain ATCC 49188 / DSM 6882 / CCUG 24695 / JCM 21032 / LMG 3331 / NBRC 15819 / NCTC 12168 / Alc 37) (Ochrobactrum anthropi).